We begin with the raw amino-acid sequence, 211 residues long: Transcription factor ces-2 (211 aa).

A compositionally biased stretch (low complexity) spans V83 to S101. Disordered regions lie at residues V83–E152 and N184–V211. Residues P111–E152 are compositionally biased toward basic and acidic residues. Positions D116 to K179 constitute a bZIP domain. Residues R122–K140 are basic motif. The interval I144 to L172 is leucine-zipper. The segment covering E190–S200 has biased composition (low complexity). Over residues N201 to V211 the composition is skewed to basic and acidic residues.

Belongs to the bZIP family. Interacts with NFIL3 transcription factor homolog atf-2.

The protein localises to the nucleus. Its function is as follows. Transcription factor. Required to activate programmed cell death in the sister cells of the serotoninergic neurosecretory motor (NSM) neurons. Negatively regulates the activity of ces-1 which in turn negatively regulates the activities of cell-killing genes. Binds to the DNA sequence 5'-RTTACGTAAY-3'. Involved in the development of the excretory duct cell, by positively modulating embryonic transcription of putative transcription factor lin-48, acting in concert with NFIL3 transcription factor homolog atf-2. Positively modulates expression of neuropeptide pigment dispersing factor homologs pdf-1 and pdf-2. This is Transcription factor ces-2 (ces-2) from Caenorhabditis elegans.